We begin with the raw amino-acid sequence, 263 residues long: MKRLLCLLLLTTLTGCETLLIKNPSAQESEVTSATTNVDAVEGDKAKEEDSGIIDTLRGRNDPIAGDPAWAPIHPKEKPEHYAAATGSLFNVDHAQDMYDDTKPRGLGDIVTVMLAENTKAAKSADAELSKSNDSSMDPLQVGGQELQMGGQYNFSYELSNDNNFTGNTSANQSNSLSGSITVEVIEVLSNGNLLIRGEKWLTLNTGDEYIRLSGTIRPDDINFDNTIDSTRISNARIQYSGTGDQQDMQEPGFLARFFNVAL.

Residues methionine 1 to glycine 15 form the signal peptide. Cysteine 16 carries the N-palmitoyl cysteine lipid modification. Residue cysteine 16 is the site of S-diacylglycerol cysteine attachment. Residues lysine 123–glycine 143 form a disordered region.

This sequence belongs to the FlgH family. As to quaternary structure, the basal body constitutes a major portion of the flagellar organelle and consists of four rings (L,P,S, and M) mounted on a central rod.

The protein resides in the cell outer membrane. It localises to the bacterial flagellum basal body. Its function is as follows. Assembles around the rod to form the L-ring and probably protects the motor/basal body from shearing forces during rotation. The polypeptide is Flagellar L-ring protein (Aliivibrio fischeri (strain ATCC 700601 / ES114) (Vibrio fischeri)).